The chain runs to 738 residues: Ethylene receptor (738 aa).

The next 3 membrane-spanning stretches (helical) occupy residues 23 to 43 (ISDFFIALAYFSIPLELIYFV), 54 to 74 (VLVQFGAFIVLCGATHLINLW), and 92 to 112 (VLTAVVSCATALMLVHIIPDL). Cys65 and His69 together coordinate Cu cation. In terms of domain architecture, GAF spans 158 to 307 (DRHTILKTTL…VVADQVAVAL (150 aa)). The Histidine kinase domain occupies 350 to 589 (VMNHEMRTPM…IFIVKLGFAE (240 aa)). His353 is subject to Phosphohistidine; by autocatalysis. One can recognise a Response regulatory domain in the interval 612–729 (PGLKVLVMDD…KMRSVLSELL (118 aa)). Asp660 bears the 4-aspartylphosphate mark.

Belongs to the ethylene receptor family. Homodimer; disulfide-linked. Requires Cu cation as cofactor. Activation probably requires a transfer of a phosphate group between a His in the transmitter domain and an Asp of the receiver domain.

It is found in the endoplasmic reticulum membrane. It carries out the reaction ATP + protein L-histidine = ADP + protein N-phospho-L-histidine.. In terms of biological role, may act early in the ethylene signal transduction pathway, possibly as an ethylene receptor, or as a regulator of the pathway. This is Ethylene receptor (ETR1) from Prunus persica (Peach).